Here is a 397-residue protein sequence, read N- to C-terminus: Protein EMSY-LIKE 3 (397 aa).

The tract at residues 1–40 (MDYRPSDSSGTDDDLPPSHQGRYQRNARPTGNGRPSVLNS) is disordered. The ENT domain occupies 50-137 (METQIHLIEQ…PQLVHDAPSP (88 aa)). Positions 81–107 (ESLITELRKELRVSDEEHRELLSRVNA) form a coiled coil. Disordered regions lie at residues 122 to 221 (SLQS…SYDP) and 284 to 330 (DPGI…TQNG). Over residues 164–174 (LHPSMQPSSSA) the composition is skewed to polar residues. The Nuclear localization signal signature appears at 175 to 182 (LRRGGPPP). Positions 363-389 (AEVEKAKRVLRDHELALMDAIAKLEEI) form a coiled coil. Serine 390 bears the Phosphoserine mark.

The protein resides in the nucleus. Functionally, probably involved in the regulation of chromatin states. Contributes to basal immunity. The chain is Protein EMSY-LIKE 3 from Arabidopsis thaliana (Mouse-ear cress).